Here is a 104-residue protein sequence, read N- to C-terminus: ATP synthase subunit c (104 aa).

A run of 2 helical transmembrane segments spans residues 31–51 (SVVAAGIGLGLAALGGAIGMG) and 75–95 (MFIALAMIEAQVIYALVVAMI).

The protein belongs to the ATPase C chain family. As to quaternary structure, F-type ATPases have 2 components, F(1) - the catalytic core - and F(0) - the membrane proton channel. F(1) has five subunits: alpha(3), beta(3), gamma(1), delta(1), epsilon(1). F(0) has three main subunits: a(1), b(2) and c(10-14). The alpha and beta chains form an alternating ring which encloses part of the gamma chain. F(1) is attached to F(0) by a central stalk formed by the gamma and epsilon chains, while a peripheral stalk is formed by the delta and b chains.

The protein resides in the cell inner membrane. Functionally, f(1)F(0) ATP synthase produces ATP from ADP in the presence of a proton or sodium gradient. F-type ATPases consist of two structural domains, F(1) containing the extramembraneous catalytic core and F(0) containing the membrane proton channel, linked together by a central stalk and a peripheral stalk. During catalysis, ATP synthesis in the catalytic domain of F(1) is coupled via a rotary mechanism of the central stalk subunits to proton translocation. Key component of the F(0) channel; it plays a direct role in translocation across the membrane. A homomeric c-ring of between 10-14 subunits forms the central stalk rotor element with the F(1) delta and epsilon subunits. This is ATP synthase subunit c from Aliarcobacter butzleri (strain RM4018) (Arcobacter butzleri).